The primary structure comprises 533 residues: Calcium-dependent protein kinase 19 (533 aa).

Polar residues-rich tracts occupy residues 1 to 12 (MGSCCSRATSPD) and 24 to 38 (SHQT…SYNH). The disordered stretch occupies residues 1 to 53 (MGSCCSRATSPDSGRGGANGYGYSHQTKPAQTTPSYNHPQPPPPAEVRYTPSA). G2 is lipidated: N-myristoyl glycine. A Protein kinase domain is found at 85 to 343 (YSLGKELGRG…SAQVLQHPWL (259 aa)). ATP is bound by residues 91 to 99 (LGRGQFGVT) and K114. The active-site Proton acceptor is D209. Positions 348 to 378 (ASDKPIDSAVLSRMKQFRAMNKLKKMALKVI) are autoinhibitory domain. 4 consecutive EF-hand domains span residues 385–420 (EEIK…LGSK), 421–456 (LSEA…RHKL), 457–492 (ERDE…HEMG), and 497–527 (IKDI…GGMQ). Ca(2+) contacts are provided by D398, D400, S402, T404, E409, D434, D436, N438, S440, E445, D470, D472, S474, E481, D505, D507, D509, R511, and E516.

This sequence belongs to the protein kinase superfamily. Ser/Thr protein kinase family. CDPK subfamily. Expressed in root tips, leaf veins, mesophyll cells, flower reproductive organs and mature pollen grains.

The protein resides in the membrane. The enzyme catalyses L-seryl-[protein] + ATP = O-phospho-L-seryl-[protein] + ADP + H(+). It catalyses the reaction L-threonyl-[protein] + ATP = O-phospho-L-threonyl-[protein] + ADP + H(+). Activated by calcium. Autophosphorylation may play an important role in the regulation of the kinase activity. In terms of biological role, may play a role in signal transduction pathways that involve calcium as a second messenger. This Oryza sativa subsp. japonica (Rice) protein is Calcium-dependent protein kinase 19.